A 408-amino-acid polypeptide reads, in one-letter code: UPF0761 membrane protein NMCC_0461 (408 aa).

The next 6 membrane-spanning stretches (helical) occupy residues 43-63 (LLAL…FPVF), 100-120 (LTAI…RTID), 139-159 (FLVY…GISF), 176-196 (WSGA…LWGL), 210-230 (AFVG…LFTW), and 248-268 (VPFF…GAVL).

It belongs to the UPF0761 family.

The protein localises to the cell inner membrane. The sequence is that of UPF0761 membrane protein NMCC_0461 from Neisseria meningitidis serogroup C (strain 053442).